We begin with the raw amino-acid sequence, 76 residues long: cAMP-dependent protein kinase inhibitor alpha (76 aa).

Thr2 is subject to N-acetylthreonine. Positions 49–76 are disordered; the sequence is KTEGEDDGQRSSTEQSGEAQGEAAKSES.

This sequence belongs to the PKI family. Present at high levels in skeletal muscle and brain but is present at lower levels in heart, testis and liver.

In terms of biological role, extremely potent competitive inhibitor of cAMP-dependent protein kinase activity, this protein interacts with the catalytic subunit of the enzyme after the cAMP-induced dissociation of its regulatory chains. This chain is cAMP-dependent protein kinase inhibitor alpha (Pkia), found in Mus musculus (Mouse).